The chain runs to 100 residues: uncharacterized protein (100 aa).

Its subcellular location is the secreted. This is an uncharacterized protein from Mycobacterium leprae (strain TN).